The chain runs to 110 residues: Insulin (110 aa).

The first 24 residues, 1–24, serve as a signal peptide directing secretion; that stretch reads MALWMHLLTVLALLALWGPNTGQA. Intrachain disulfides connect Cys-31–Cys-96, Cys-43–Cys-109, and Cys-95–Cys-100. Residues 57–87 constitute a propeptide, c peptide; sequence ELEDPQVEQTELGMGLGAGGLQPLALEMALQ.

This sequence belongs to the insulin family. As to quaternary structure, heterodimer of a B chain and an A chain linked by two disulfide bonds.

The protein resides in the secreted. Functionally, insulin decreases blood glucose concentration. It increases cell permeability to monosaccharides, amino acids and fatty acids. It accelerates glycolysis, the pentose phosphate cycle, and glycogen synthesis in liver. In Cavia porcellus (Guinea pig), this protein is Insulin (INS).